The sequence spans 406 residues: Copper transport protein CTR1 (406 aa).

Topologically, residues 1-152 (MEGMNMGSSM…HHLHANNSGK (152 aa)) are cytoplasmic. Repeat copies occupy residues 9-27 (SMNM…SSMA), 28-46 (SMSM…SSMS), and 47-65 (SMSM…STMS). A 3 X 19 AA tandem repeats of S-M-X-M-X-A-M-S-S-A-S-K-T-X-X-S-X-M-X region spans residues 9–65 (SMNMDAMSSASKTVASSMASMSMDAMSSASKTILSSMSSMSMEAMSSASKTLASTMS). The segment at 71-117 (SMGSSSMSGMSMSMSSTPTSSASAQTTSDSSMSGMSGMSSSDNSSSS) is disordered. Residues 153-173 (AFGIFLLFVVAAFVYKLLLFV) traverse the membrane as a helical segment. At 174-250 (SWCLEVHWFK…RAFLVFTSTM (77 aa)) the chain is on the extracellular side. Residues 251-271 (IIYMLMLATMSFVLTYVFAVI) form a helical membrane-spanning segment. Residues 272–406 (TGLALSEVFF…LLPAEKFTHN (135 aa)) are Cytoplasmic-facing. An REP-III motif is present at residues 304 to 315 (CPGFGNCQCGRH). A disordered region spans residues 318 to 406 (PSPDPIAVAD…LLPAEKFTHN (89 aa)). Ser344 is subject to Phosphoserine. Residue Lys345 forms a Glycyl lysine isopeptide (Lys-Gly) (interchain with G-Cter in ubiquitin) linkage. The residue at position 349 (Ser349) is a Phosphoserine. Polar residues-rich tracts occupy residues 349-375 (SENN…NQAN) and 384-395 (SKLQEQSGNMDQ). A Phosphothreonine modification is found at Thr356. At Ser369 the chain carries Phosphoserine.

Homooligomer. In terms of processing, extensively O-glycosylated.

Its subcellular location is the cell membrane. The enzyme catalyses Cu(2+)(in) = Cu(2+)(out). Its function is as follows. High-affinity copper transporter of plasma membrane that mediates copper uptake under low copper conditions. Copper transport through the high affinity system requiring CTRl supplies the iron transport multicopper ferroxidase FET3 with copper, which in turn is required for ferrous iron uptake. The energy for translocation is unlikely to be directly derived from ATP hydrolysis and the exact mechanism driving the transmembrane transport of copper has still to be determined. Binds 4 copper ions via its C-terminal cystein-rich domain and is able to deliver Cu(I) directly to both the chaperone ATX1 and to an N-terminal domain of the CCC2 protein. Also able to mediate the uptake of the anticancer drug cisplatin. This Saccharomyces cerevisiae (strain ATCC 204508 / S288c) (Baker's yeast) protein is Copper transport protein CTR1.